Reading from the N-terminus, the 555-residue chain is Glucose-6-phosphate isomerase (555 aa).

Glutamate 355 functions as the Proton donor in the catalytic mechanism. Residues histidine 386 and lysine 514 contribute to the active site.

The protein belongs to the GPI family.

It localises to the cytoplasm. The enzyme catalyses alpha-D-glucose 6-phosphate = beta-D-fructose 6-phosphate. It participates in carbohydrate biosynthesis; gluconeogenesis. Its pathway is carbohydrate degradation; glycolysis; D-glyceraldehyde 3-phosphate and glycerone phosphate from D-glucose: step 2/4. Its function is as follows. Catalyzes the reversible isomerization of glucose-6-phosphate to fructose-6-phosphate. The chain is Glucose-6-phosphate isomerase from Buchnera aphidicola subsp. Schizaphis graminum (strain Sg).